A 1490-amino-acid polypeptide reads, in one-letter code: DNA-directed RNA polymerase subunit beta' (1490 aa).

The Zn(2+) site is built by Cys67, Cys69, Cys82, and Cys85. Residues Asp499, Asp501, and Asp503 each coordinate Mg(2+). Residues Cys868, Cys944, Cys951, and Cys954 each contribute to the Zn(2+) site.

It belongs to the RNA polymerase beta' chain family. The RNAP catalytic core consists of 2 alpha, 1 beta, 1 beta' and 1 omega subunit. When a sigma factor is associated with the core the holoenzyme is formed, which can initiate transcription. The cofactor is Mg(2+). Requires Zn(2+) as cofactor.

The catalysed reaction is RNA(n) + a ribonucleoside 5'-triphosphate = RNA(n+1) + diphosphate. Functionally, DNA-dependent RNA polymerase catalyzes the transcription of DNA into RNA using the four ribonucleoside triphosphates as substrates. This Chlorobaculum tepidum (strain ATCC 49652 / DSM 12025 / NBRC 103806 / TLS) (Chlorobium tepidum) protein is DNA-directed RNA polymerase subunit beta'.